Reading from the N-terminus, the 225-residue chain is LHFPL tetraspan subfamily member 2a protein (225 aa).

4 helical membrane passes run 11–31 (MLWT…FLST), 99–119 (IFLA…IFTM), 129–149 (IFNV…VGLV), and 178–198 (AGWA…CAVF).

Belongs to the LHFP family.

It is found in the membrane. Its function is as follows. Plays a role in fertility. Involved in distal reproductive tract development. The chain is LHFPL tetraspan subfamily member 2a protein from Danio rerio (Zebrafish).